The chain runs to 451 residues: Methylenetetrahydrofolate--tRNA-(uracil-5-)-methyltransferase TrmFO (451 aa).

10–15 is a binding site for FAD; that stretch reads GGGLAG.

This sequence belongs to the MnmG family. TrmFO subfamily. FAD serves as cofactor.

Its subcellular location is the cytoplasm. It carries out the reaction uridine(54) in tRNA + (6R)-5,10-methylene-5,6,7,8-tetrahydrofolate + NADH + H(+) = 5-methyluridine(54) in tRNA + (6S)-5,6,7,8-tetrahydrofolate + NAD(+). The enzyme catalyses uridine(54) in tRNA + (6R)-5,10-methylene-5,6,7,8-tetrahydrofolate + NADPH + H(+) = 5-methyluridine(54) in tRNA + (6S)-5,6,7,8-tetrahydrofolate + NADP(+). Catalyzes the folate-dependent formation of 5-methyl-uridine at position 54 (M-5-U54) in all tRNAs. This is Methylenetetrahydrofolate--tRNA-(uracil-5-)-methyltransferase TrmFO from Anaeromyxobacter sp. (strain Fw109-5).